Here is a 302-residue protein sequence, read N- to C-terminus: Sulfate adenylyltransferase subunit 2 (302 aa).

It belongs to the PAPS reductase family. CysD subfamily. Heterodimer composed of CysD, the smaller subunit, and CysN.

It carries out the reaction sulfate + ATP + H(+) = adenosine 5'-phosphosulfate + diphosphate. Its pathway is sulfur metabolism; hydrogen sulfide biosynthesis; sulfite from sulfate: step 1/3. With CysN forms the ATP sulfurylase (ATPS) that catalyzes the adenylation of sulfate producing adenosine 5'-phosphosulfate (APS) and diphosphate, the first enzymatic step in sulfur assimilation pathway. APS synthesis involves the formation of a high-energy phosphoric-sulfuric acid anhydride bond driven by GTP hydrolysis by CysN coupled to ATP hydrolysis by CysD. The polypeptide is Sulfate adenylyltransferase subunit 2 (Zymomonas mobilis subsp. mobilis (strain ATCC 31821 / ZM4 / CP4)).